The primary structure comprises 110 residues: Insulin growth factor-like family member 1 (110 aa).

The N-terminal stretch at 1-24 is a signal peptide; sequence MAPRGCIVAVFAIFCISRLLCSHG. Asparagine 71 carries N-linked (GlcNAc...) asparagine glycosylation.

Belongs to the IGFL family. As to quaternary structure, homodimer; disulfide-linked. As to expression, detected in ovary and spinal cord.

The protein localises to the secreted. Probable ligand of the IGFLR1 cell membrane receptor. In Homo sapiens (Human), this protein is Insulin growth factor-like family member 1 (IGFL1).